Here is a 637-residue protein sequence, read N- to C-terminus: Chaperone protein HtpG (637 aa).

The tract at residues 1-345 is a; substrate-binding; sequence MSQQETHGFQ…SNDLPLNVSR (345 aa). The b stretch occupies residues 346–562; it reads EILQDNQVTT…EGEMSTQMIK (217 aa). Residues 563–637 form a c region; the sequence is LMQAAGQPVP…TNQMLLASVK (75 aa).

The protein belongs to the heat shock protein 90 family. In terms of assembly, homodimer.

The protein resides in the cytoplasm. In terms of biological role, molecular chaperone. Has ATPase activity. This is Chaperone protein HtpG from Shewanella frigidimarina (strain NCIMB 400).